The primary structure comprises 130 residues: WAP four-disulfide core domain protein 3 (130 aa).

The N-terminal stretch at 1-16 (MKALLALGFLASWVAA) is a signal peptide. WAP domains lie at 17-61 (GEHA…RGDI) and 62-106 (EGGR…IPGL). Intrachain disulfides connect Cys-25–Cys-49, Cys-32–Cys-53, Cys-36–Cys-48, Cys-42–Cys-57, Cys-69–Cys-94, Cys-77–Cys-98, Cys-81–Cys-93, and Cys-87–Cys-102. An N-linked (GlcNAc...) asparagine glycan is attached at Asn-116.

Its subcellular location is the secreted. This is WAP four-disulfide core domain protein 3 (Wfdc3) from Mus musculus (Mouse).